A 106-amino-acid chain; its full sequence is Large ribosomal subunit protein bL21 (106 aa).

It belongs to the bacterial ribosomal protein bL21 family. As to quaternary structure, part of the 50S ribosomal subunit. Contacts protein L20.

In terms of biological role, this protein binds to 23S rRNA in the presence of protein L20. In Xanthomonas oryzae pv. oryzae (strain MAFF 311018), this protein is Large ribosomal subunit protein bL21.